A 635-amino-acid chain; its full sequence is Threonine--tRNA ligase (635 aa).

In terms of domain architecture, TGS spans Met1 to Thr61. A catalytic region spans residues Asp242–Pro532. Positions 333, 384, and 509 each coordinate Zn(2+).

It belongs to the class-II aminoacyl-tRNA synthetase family. Homodimer. It depends on Zn(2+) as a cofactor.

The protein localises to the cytoplasm. It carries out the reaction tRNA(Thr) + L-threonine + ATP = L-threonyl-tRNA(Thr) + AMP + diphosphate + H(+). Its function is as follows. Catalyzes the attachment of threonine to tRNA(Thr) in a two-step reaction: L-threonine is first activated by ATP to form Thr-AMP and then transferred to the acceptor end of tRNA(Thr). Also edits incorrectly charged L-seryl-tRNA(Thr). The protein is Threonine--tRNA ligase of Clostridium botulinum (strain Langeland / NCTC 10281 / Type F).